The chain runs to 944 residues: Protocadherin gamma-C5 (944 aa).

Residues 1–29 form the signal peptide; that stretch reads MGPKTLPQLAGKWQVLCMLSLCCWGWVSG. Cadherin domains follow at residues 30–133, 134–242, 243–350, 351–454, 455–564, and 571–677; these read QLRY…SPSF, ATPE…APTF, QSSV…APEV, LLAS…APRF, NQQL…APAV, and WEHS…MPKS. The Extracellular portion of the chain corresponds to 30–693; sequence QLRYSVVEES…PPERSDLTLY (664 aa). Residues Asn265, Asn443, and Asn547 are each glycosylated (N-linked (GlcNAc...) asparagine). Residues 694 to 714 traverse the membrane as a helical segment; sequence LIVALATVSLLSLVTFTFLSA. The Cytoplasmic segment spans residues 715–944; the sequence is KCLQGNADGD…KKKSGKKEKK (230 aa). Disordered regions lie at residues 722–747, 812–853, and 914–944; these read DGDG…QSSP, SNTL…WPNN, and ATLT…KEKK. Residues 820-853 are compositionally biased toward polar residues; that stretch reads QQAPPNTDWRFSQAQRPGTSGSQNGDDTGTWPNN. The span at 934 to 944 shows a compositional bias: basic residues; that stretch reads NKKKSGKKEKK.

Its subcellular location is the cell membrane. In terms of biological role, potential calcium-dependent cell-adhesion protein. May be involved in the establishment and maintenance of specific neuronal connections in the brain. This chain is Protocadherin gamma-C5 (PCDHGC5), found in Homo sapiens (Human).